The sequence spans 762 residues: Subtilisin-like protease SBT3.11 (762 aa).

An N-terminal signal peptide occupies residues 1–16 (MMSSIVSWWFFWVISA). A propeptide spans 17 to 116 (VCILKVEFNI…VTPNTFYELQ (100 aa)) (activation peptide). One can recognise an Inhibitor I9 domain in the interval 37-115 (VHIVYLGEKE…QVTPNTFYEL (79 aa)). The Peptidase S8 domain maps to 120–609 (TFDYLGLSHS…GGLVNPNKAA (490 aa)). Asp-150 (charge relay system) is an active-site residue. Asn-206 is a glycosylation site (N-linked (GlcNAc...) asparagine). His-226 serves as the catalytic Charge relay system. Residues Asn-241 and Asn-371 are each glycosylated (N-linked (GlcNAc...) asparagine). Ser-540 functions as the Charge relay system in the catalytic mechanism.

Belongs to the peptidase S8 family.

The protein localises to the secreted. The polypeptide is Subtilisin-like protease SBT3.11 (Arabidopsis thaliana (Mouse-ear cress)).